A 288-amino-acid chain; its full sequence is ATP synthase gamma chain (288 aa).

It belongs to the ATPase gamma chain family. In terms of assembly, F-type ATPases have 2 components, CF(1) - the catalytic core - and CF(0) - the membrane proton channel. CF(1) has five subunits: alpha(3), beta(3), gamma(1), delta(1), epsilon(1). CF(0) has three main subunits: a, b and c.

Its subcellular location is the cell inner membrane. Its function is as follows. Produces ATP from ADP in the presence of a proton gradient across the membrane. The gamma chain is believed to be important in regulating ATPase activity and the flow of protons through the CF(0) complex. The chain is ATP synthase gamma chain from Rickettsia canadensis (strain McKiel).